We begin with the raw amino-acid sequence, 221 residues long: Guanylate kinase (221 aa).

Residues 18–196 form the Guanylate kinase-like domain; that stretch reads GFLFILSSPS…SASLIKSIYL (179 aa). 25–32 contributes to the ATP binding site; it reads SPSGAGKS.

It belongs to the guanylate kinase family.

The protein localises to the cytoplasm. The catalysed reaction is GMP + ATP = GDP + ADP. Functionally, essential for recycling GMP and indirectly, cGMP. This Bartonella quintana (strain Toulouse) (Rochalimaea quintana) protein is Guanylate kinase.